Consider the following 433-residue polypeptide: Bifunctional protein GlmU (433 aa).

The pyrophosphorylase stretch occupies residues 1–226 (MLSVIILAAG…EECFLGVNSQ (226 aa)). Residues 7 to 10 (LAAG), Lys21, and 80 to 81 (GT) each bind UDP-N-acetyl-alpha-D-glucosamine. Mg(2+) is bound at residue Asp106. Residues Gly138, Glu152, Asn167, and Asn224 each contribute to the UDP-N-acetyl-alpha-D-glucosamine site. Mg(2+) is bound at residue Asn224. Residues 227–247 (TERAKAEEIMLERLRKNAMDL) are linker. Residues 248–433 (GVVMQLPSSI…NGYFKFFKKP (186 aa)) form an N-acetyltransferase region. Residues Arg311 and Lys328 each coordinate UDP-N-acetyl-alpha-D-glucosamine. Residue His339 is the Proton acceptor of the active site. The UDP-N-acetyl-alpha-D-glucosamine site is built by Tyr342 and Asn353. Residues Ala356, 362–363 (NY), Ser381, Ser399, and Arg416 each bind acetyl-CoA.

The protein in the N-terminal section; belongs to the N-acetylglucosamine-1-phosphate uridyltransferase family. In the C-terminal section; belongs to the transferase hexapeptide repeat family. Homotrimer. Mg(2+) is required as a cofactor.

It is found in the cytoplasm. The enzyme catalyses alpha-D-glucosamine 1-phosphate + acetyl-CoA = N-acetyl-alpha-D-glucosamine 1-phosphate + CoA + H(+). It catalyses the reaction N-acetyl-alpha-D-glucosamine 1-phosphate + UTP + H(+) = UDP-N-acetyl-alpha-D-glucosamine + diphosphate. It functions in the pathway nucleotide-sugar biosynthesis; UDP-N-acetyl-alpha-D-glucosamine biosynthesis; N-acetyl-alpha-D-glucosamine 1-phosphate from alpha-D-glucosamine 6-phosphate (route II): step 2/2. It participates in nucleotide-sugar biosynthesis; UDP-N-acetyl-alpha-D-glucosamine biosynthesis; UDP-N-acetyl-alpha-D-glucosamine from N-acetyl-alpha-D-glucosamine 1-phosphate: step 1/1. Its pathway is bacterial outer membrane biogenesis; LPS lipid A biosynthesis. Its function is as follows. Catalyzes the last two sequential reactions in the de novo biosynthetic pathway for UDP-N-acetylglucosamine (UDP-GlcNAc). The C-terminal domain catalyzes the transfer of acetyl group from acetyl coenzyme A to glucosamine-1-phosphate (GlcN-1-P) to produce N-acetylglucosamine-1-phosphate (GlcNAc-1-P), which is converted into UDP-GlcNAc by the transfer of uridine 5-monophosphate (from uridine 5-triphosphate), a reaction catalyzed by the N-terminal domain. The polypeptide is Bifunctional protein GlmU (Helicobacter pylori (strain HPAG1)).